The primary structure comprises 273 residues: Nitrogenase iron protein 2 (273 aa).

8-15 (GKGGIGKS) contributes to the ATP binding site. C95 serves as a coordination point for [4Fe-4S] cluster. R98 is subject to ADP-ribosylarginine; by dinitrogenase reductase ADP-ribosyltransferase. C130 is a [4Fe-4S] cluster binding site.

It belongs to the NifH/BchL/ChlL family. In terms of assembly, homodimer. It depends on [4Fe-4S] cluster as a cofactor. In terms of processing, the reversible ADP-ribosylation of Arg-98 inactivates the nitrogenase reductase and regulates nitrogenase activity.

The catalysed reaction is N2 + 8 reduced [2Fe-2S]-[ferredoxin] + 16 ATP + 16 H2O = H2 + 8 oxidized [2Fe-2S]-[ferredoxin] + 2 NH4(+) + 16 ADP + 16 phosphate + 6 H(+). Functionally, the key enzymatic reactions in nitrogen fixation are catalyzed by the nitrogenase complex, which has 2 components: the iron protein and the molybdenum-iron protein. This Methanosarcina barkeri protein is Nitrogenase iron protein 2 (nifH2).